A 237-amino-acid polypeptide reads, in one-letter code: Small ribosomal subunit protein uS3 (237 aa).

One can recognise a KH type-2 domain in the interval 39 to 107 (IRAYLMEELK…ETHLNIVEVR (69 aa)). Residues 213-237 (MASERRATESDNQGGGGRDRRRENA) are disordered.

It belongs to the universal ribosomal protein uS3 family. In terms of assembly, part of the 30S ribosomal subunit. Forms a tight complex with proteins S10 and S14.

Functionally, binds the lower part of the 30S subunit head. Binds mRNA in the 70S ribosome, positioning it for translation. This Sinorhizobium fredii (strain NBRC 101917 / NGR234) protein is Small ribosomal subunit protein uS3.